Here is a 438-residue protein sequence, read N- to C-terminus: Serine hydroxymethyltransferase (438 aa).

(6S)-5,6,7,8-tetrahydrofolate is bound by residues leucine 135 and 139–141 (GHL). Lysine 244 bears the N6-(pyridoxal phosphate)lysine mark. Residues 361–383 (GVPNDPLPPVKTSGIRVGSPAGT) form a disordered region.

Belongs to the SHMT family. As to quaternary structure, homodimer. The cofactor is pyridoxal 5'-phosphate.

It localises to the cytoplasm. The enzyme catalyses (6R)-5,10-methylene-5,6,7,8-tetrahydrofolate + glycine + H2O = (6S)-5,6,7,8-tetrahydrofolate + L-serine. It participates in one-carbon metabolism; tetrahydrofolate interconversion. It functions in the pathway amino-acid biosynthesis; glycine biosynthesis; glycine from L-serine: step 1/1. Its function is as follows. Catalyzes the reversible interconversion of serine and glycine with tetrahydrofolate (THF) serving as the one-carbon carrier. This reaction serves as the major source of one-carbon groups required for the biosynthesis of purines, thymidylate, methionine, and other important biomolecules. Also exhibits THF-independent aldolase activity toward beta-hydroxyamino acids, producing glycine and aldehydes, via a retro-aldol mechanism. The protein is Serine hydroxymethyltransferase of Rhizorhabdus wittichii (strain DSM 6014 / CCUG 31198 / JCM 15750 / NBRC 105917 / EY 4224 / RW1) (Sphingomonas wittichii).